The chain runs to 1027 residues: Protein translocase subunit SecA (1027 aa).

ATP is bound by residues Gln-143, 161–165, and Asp-661; that span reads GEGKT. The tract at residues 981 to 1027 is disordered; it reads EESGTSNADNAGDNGPQTVIAEKKPGRNDLCPCGSGKKYKNCHGQQP. Zn(2+)-binding residues include Cys-1011, Cys-1013, Cys-1022, and His-1023.

This sequence belongs to the SecA family. As to quaternary structure, monomer and homodimer. Part of the essential Sec protein translocation apparatus which comprises SecA, SecYEG and auxiliary proteins SecDF. Other proteins may also be involved. Zn(2+) serves as cofactor.

It is found in the cell inner membrane. Its subcellular location is the cytoplasm. The enzyme catalyses ATP + H2O + cellular proteinSide 1 = ADP + phosphate + cellular proteinSide 2.. Part of the Sec protein translocase complex. Interacts with the SecYEG preprotein conducting channel. Has a central role in coupling the hydrolysis of ATP to the transfer of proteins into and across the cell membrane, serving as an ATP-driven molecular motor driving the stepwise translocation of polypeptide chains across the membrane. The polypeptide is Protein translocase subunit SecA (Chlorobium limicola (strain DSM 245 / NBRC 103803 / 6330)).